The sequence spans 222 residues: Protein-L-isoaspartate O-methyltransferase (222 aa).

Ser70 is a catalytic residue.

Belongs to the methyltransferase superfamily. L-isoaspartyl/D-aspartyl protein methyltransferase family.

It is found in the cytoplasm. It catalyses the reaction [protein]-L-isoaspartate + S-adenosyl-L-methionine = [protein]-L-isoaspartate alpha-methyl ester + S-adenosyl-L-homocysteine. Its function is as follows. Catalyzes the methyl esterification of L-isoaspartyl residues in peptides and proteins that result from spontaneous decomposition of normal L-aspartyl and L-asparaginyl residues. It plays a role in the repair and/or degradation of damaged proteins. This chain is Protein-L-isoaspartate O-methyltransferase, found in Jannaschia sp. (strain CCS1).